The following is a 251-amino-acid chain: Derlin-1 (251 aa).

S2 carries the post-translational modification N-acetylserine. Residues 2-15 (SDIGDWFRSIPAIT) are Cytoplasmic-facing. The chain crosses the membrane as a helical span at residues 16–31 (RYWFAATVAVPLVGKL). Over 32–69 (GLISPAYLFLWPEAFLYRFQIWRPITATFYFPVGPGTG) the chain is Lumenal. The chain crosses the membrane as a helical span at residues 70–89 (FLYLVNLYFLYHYSTRLETG). The Cytoplasmic segment spans residues 90-94 (AFDGR). A helical membrane pass occupies residues 95-115 (PADYLFMLLFNWICIVITGLA). The Lumenal portion of the chain corresponds to 116 to 122 (MDMQLLM). The chain crosses the membrane as a helical span at residues 123-137 (IPLIMSVLYVWAQLN). Residues 138-154 (RDMIVSFWFGTRFKACY) are Cytoplasmic-facing. The chain crosses the membrane as a helical span at residues 155 to 166 (LPWVILGFNYII). At 167-170 (GGSV) the chain is on the lumenal side. Residues 171–189 (INELIGNLVGHLYFFLMFR) traverse the membrane as a helical segment. Topologically, residues 190 to 251 (YPMDLGGRNF…WGQGFRLGDQ (62 aa)) are cytoplasmic. S201 bears the Phosphoserine mark. Position 202 is a phosphothreonine (T202). S226 carries the post-translational modification Phosphoserine. The disordered stretch occupies residues 229 to 251 (RAADQNGGGGRHNWGQGFRLGDQ). An SHP-box motif is present at residues 241–248 (NWGQGFRL).

The protein belongs to the derlin family. As to quaternary structure, homotetramer. The four subunits of the tetramer are arranged in a twofold symmetry. Forms homo- and heterooligomers with DERL2 and DERL3; binding to DERL3 is poorer than that between DERL2 and DERL3. Interacts (via SHP-box motif) with VCP. Interacts with AMFR, SELENOS, SEL1L, SELENOK and SYVN1, as well as with SEL1L-SYVN1 and VCP-SELENOS protein complexes; this interaction is weaker than that observed between DERL2 and these complexes. Interacts with NGLY1 and YOD1. Does not bind to EDEM1. Interacts with DNAJB9. Interacts with RNF103. Interacts with HM13. Interacts with XBP1 isoform 1 (via luminal/ectodomain domain); the interaction obviates the need for ectodomain shedding prior HM13/SPP-mediated XBP1 isoform 1 cleavage. Interacts with the signal recognition particle/SRP and the SRP receptor; in the process of endoplasmic reticulum stress-induced pre-emptive quality control. May interact with UBXN6. Interacts with ZFAND2B; probably through VCP. Interacts with CCDC47. Interacts with C18orf32. May interact with TRAM1. Forms a complex with SVIP and VCP/p97.

The protein localises to the endoplasmic reticulum membrane. Functional component of endoplasmic reticulum-associated degradation (ERAD) for misfolded lumenal proteins. Forms homotetramers which encircle a large channel traversing the endoplasmic reticulum (ER) membrane. This allows the retrotranslocation of misfolded proteins from the ER into the cytosol where they are ubiquitinated and degraded by the proteasome. The channel has a lateral gate within the membrane which provides direct access to membrane proteins with no need to reenter the ER lumen first. May mediate the interaction between VCP and the misfolded protein. Also involved in endoplasmic reticulum stress-induced pre-emptive quality control, a mechanism that selectively attenuates the translocation of newly synthesized proteins into the endoplasmic reticulum and reroutes them to the cytosol for proteasomal degradation. By controlling the steady-state expression of the IGF1R receptor, indirectly regulates the insulin-like growth factor receptor signaling pathway. This is Derlin-1 from Pongo abelii (Sumatran orangutan).